The following is a 334-amino-acid chain: Putative heat shock protein HSP 90-alpha A5 (334 aa).

The segment at 55 to 107 (KRNKQVSDAEAEKKEDKRKKKKESNDKPEIEDVGSDEEEEKKDADKKKKKSKE) is disordered. Residues 59 to 69 (QVSDAEAEKKE) are compositionally biased toward basic and acidic residues. Residues 85–94 (EDVGSDEEEE) show a composition bias toward acidic residues. Phosphoserine is present on S89. Residues 234 to 267 (LELPEDEEEKKKQEEKKTKFENLCKIMKDMLEKK) adopt a coiled-coil conformation. A disordered region spans residues 314–334 (EMPPLRGGDDTSRMEEVGGSG). Residues 320–334 (GGDDTSRMEEVGGSG) show a composition bias toward basic and acidic residues. Residues 327–331 (MEEVG) carry the TPR repeat-binding motif.

Belongs to the heat shock protein 90 family. As to quaternary structure, homodimer.

The protein localises to the cytoplasm. In terms of biological role, putative molecular chaperone that may promote the maturation, structural maintenance and proper regulation of specific target proteins. In Homo sapiens (Human), this protein is Putative heat shock protein HSP 90-alpha A5 (HSP90AA5P).